The sequence spans 53 residues: Conotoxin Ac4.3b (53 aa).

A propeptide spanning residues 1 to 11 is cleaved from the precursor; it reads SDVRNAAVHER. Position 12 is a pyrrolidone carboxylic acid (Q12). E14 is subject to 4-carboxyglutamate. The O-linked (HexNAc...) serine glycan is linked to S18. P28, P33, and P48 each carry 4-hydroxyproline. A Proline amide modification is found at P48. The propeptide occupies 49–53; sequence GRRND.

This sequence belongs to the conotoxin A superfamily. Contains 3 disulfide bonds. As to expression, expressed by the venom duct.

Its subcellular location is the secreted. Its function is as follows. Probable neurotoxin with ion channel inhibitor activity. The polypeptide is Conotoxin Ac4.3b (Conus achatinus (Little frog cone)).